The chain runs to 83 residues: MALSTRTQAACLLLLLLASLSSTTYLHQQMRQTTELQPLHGEESRADIAIPMQKRRKRDTNFPICIFCCKCCNNSQCGICCKT.

Residues 1-23 (MALSTRTQAACLLLLLLASLSST) form the signal peptide. Positions 24 to 53 (TYLHQQMRQTTELQPLHGEESRADIAIPMQ) are excised as a propeptide. 4 cysteine pairs are disulfide-bonded: Cys65–Cys81, Cys68–Cys71, Cys69–Cys77, and Cys72–Cys80.

The protein belongs to the hepcidin family. Interacts with SLC40A1; this interaction promotes SLC40A1 rapid ubiquitination. As to expression, highly expressed in the liver and to a much lesser extent in the heart. Secreted in blood.

The protein resides in the secreted. Liver-produced hormone that constitutes the main circulating regulator of iron absorption and distribution across tissues. Acts by promoting endocytosis and degradation of SLC40A1, leading to the retention of iron in iron-exporting cells and decreased flow of iron into plasma. Controls the major flows of iron into plasma: absorption of dietary iron in the intestine, recycling of iron by macrophages, which phagocytose old erythrocytes and other cells, and mobilization of stored iron from hepatocytes. This is Hepcidin (Hamp) from Mus musculus (Mouse).